The following is a 1006-amino-acid chain: Unconventional myosin-Id (1006 aa).

Ala-2 bears the N-acetylalanine mark. One can recognise a Myosin motor domain in the interval 9–695 (FGKADFVLMD…TLFTLEELRA (687 aa)). Residue 102–109 (GESGAGKT) coordinates ATP. Ser-200 is modified (phosphoserine). The residue at position 536 (Tyr-536) is a Phosphotyrosine. The interval 572–594 (MIALVDNLASKEPYYVRCIKPND) is actin-binding. IQ domains are found at residues 699–719 (VRIVLFLQKVWRGTLARMRYK) and 721–741 (TKAALTIIRYYRRYKVKSYIH). The region spanning 812-1005 (GQRADLGLQR…RSGFILSVPG (194 aa)) is the TH1 domain.

It belongs to the TRAFAC class myosin-kinesin ATPase superfamily. Myosin family. In terms of assembly, interacts (via the two IQ motifs) with calmodulin. Binds an additional calmodulin chain via a third, C-terminal region. Interacts with F-actin.

The protein resides in the cytoplasm. It is found in the perikaryon. It localises to the cell projection. The protein localises to the dendrite. Its subcellular location is the early endosome. The protein resides in the cell cortex. Unconventional myosin that functions as actin-based motor protein with ATPase activity. Plays a role in endosomal protein trafficking, and especially in the transfer of cargo proteins from early to recycling endosomes. Required for normal planar cell polarity in ciliated tracheal cells, for normal rotational polarity of cilia, and for coordinated, unidirectional ciliary movement in the trachea. Required for normal, polarized cilia organization in brain ependymal epithelial cells. This Bos taurus (Bovine) protein is Unconventional myosin-Id (MYO1D).